The primary structure comprises 286 residues: Pyridoxal kinase PdxY (286 aa).

Substrate-binding positions include Ser9 and 44 to 45; that span reads TQ. Residues Asp111, Ala143, Glu148, Lys181, and 208–211 contribute to the ATP site; that span reads RPLV. Residue Asp223 coordinates substrate.

This sequence belongs to the pyridoxine kinase family. PdxY subfamily. As to quaternary structure, homodimer. Mg(2+) serves as cofactor.

The enzyme catalyses pyridoxal + ATP = pyridoxal 5'-phosphate + ADP + H(+). The protein operates within cofactor metabolism; pyridoxal 5'-phosphate salvage; pyridoxal 5'-phosphate from pyridoxal: step 1/1. Functionally, pyridoxal kinase involved in the salvage pathway of pyridoxal 5'-phosphate (PLP). Catalyzes the phosphorylation of pyridoxal to PLP. The sequence is that of Pyridoxal kinase PdxY from Salmonella paratyphi A (strain ATCC 9150 / SARB42).